Here is a 151-residue protein sequence, read N- to C-terminus: S-ribosylhomocysteine lyase (151 aa).

Residues H54, H58, and C121 each coordinate Fe cation.

It belongs to the LuxS family. Homodimer. Fe cation serves as cofactor.

The enzyme catalyses S-(5-deoxy-D-ribos-5-yl)-L-homocysteine = (S)-4,5-dihydroxypentane-2,3-dione + L-homocysteine. Its function is as follows. Involved in the synthesis of autoinducer 2 (AI-2) which is secreted by bacteria and is used to communicate both the cell density and the metabolic potential of the environment. The regulation of gene expression in response to changes in cell density is called quorum sensing. Catalyzes the transformation of S-ribosylhomocysteine (RHC) to homocysteine (HC) and 4,5-dihydroxy-2,3-pentadione (DPD). This is S-ribosylhomocysteine lyase from Clostridium botulinum (strain Alaska E43 / Type E3).